Consider the following 177-residue polypeptide: Large ribosomal subunit protein uL6 (177 aa).

The protein belongs to the universal ribosomal protein uL6 family. In terms of assembly, part of the 50S ribosomal subunit.

Functionally, this protein binds to the 23S rRNA, and is important in its secondary structure. It is located near the subunit interface in the base of the L7/L12 stalk, and near the tRNA binding site of the peptidyltransferase center. The sequence is that of Large ribosomal subunit protein uL6 from Cupriavidus pinatubonensis (strain JMP 134 / LMG 1197) (Cupriavidus necator (strain JMP 134)).